An 81-amino-acid polypeptide reads, in one-letter code: Large ribosomal subunit protein bL27m (81 aa).

Over residues 1–11 (MATKKSGGSSR) the composition is skewed to polar residues. Residues 1-20 (MATKKSGGSSRNGRDSKGRR) form a disordered region.

The protein belongs to the bacterial ribosomal protein bL27 family.

The protein localises to the mitochondrion. The polypeptide is Large ribosomal subunit protein bL27m (RPL27) (Reclinomonas americana).